The primary structure comprises 283 residues: Pantothenate synthetase (283 aa).

31-38 (MGALHDGH) lines the ATP pocket. The active-site Proton donor is His-38. Gln-62 lines the (R)-pantoate pocket. Gln-62 provides a ligand contact to beta-alanine. Position 148–151 (148–151 (GKKD)) interacts with ATP. Gln-154 is a binding site for (R)-pantoate. ATP contacts are provided by residues Val-177 and 185–188 (KSSR).

This sequence belongs to the pantothenate synthetase family. In terms of assembly, homodimer.

It is found in the cytoplasm. It catalyses the reaction (R)-pantoate + beta-alanine + ATP = (R)-pantothenate + AMP + diphosphate + H(+). Its pathway is cofactor biosynthesis; (R)-pantothenate biosynthesis; (R)-pantothenate from (R)-pantoate and beta-alanine: step 1/1. Its function is as follows. Catalyzes the condensation of pantoate with beta-alanine in an ATP-dependent reaction via a pantoyl-adenylate intermediate. In Staphylococcus aureus (strain USA300), this protein is Pantothenate synthetase.